We begin with the raw amino-acid sequence, 147 residues long: 3-dehydroquinate dehydratase (147 aa).

The Proton acceptor role is filled by Tyr-22. Residues Asn-73, His-79, and Asp-86 each coordinate substrate. Catalysis depends on His-99, which acts as the Proton donor. Substrate contacts are provided by residues 100–101 (LS) and Arg-110.

This sequence belongs to the type-II 3-dehydroquinase family. Homododecamer.

It catalyses the reaction 3-dehydroquinate = 3-dehydroshikimate + H2O. Its pathway is metabolic intermediate biosynthesis; chorismate biosynthesis; chorismate from D-erythrose 4-phosphate and phosphoenolpyruvate: step 3/7. In terms of biological role, catalyzes a trans-dehydration via an enolate intermediate. This chain is 3-dehydroquinate dehydratase, found in Synechococcus sp. (strain WH7803).